We begin with the raw amino-acid sequence, 244 residues long: Protein DMP9 (244 aa).

A disordered region spans residues methionine 1–arginine 56. Over residues proline 18 to serine 29 the composition is skewed to pro residues. Low complexity predominate over residues proline 30 to alanine 45. The next 4 helical transmembrane spans lie at methionine 71 to isoleucine 91, glycine 99 to phenylalanine 119, leucine 173 to phenylalanine 193, and valine 213 to proline 233.

The protein belongs to the plant DMP1 protein family. As to expression, restricted to flowers and pollen.

It is found in the endoplasmic reticulum membrane. Its subcellular location is the vacuole membrane. In terms of biological role, involved in membrane remodeling. This is Protein DMP9 from Arabidopsis thaliana (Mouse-ear cress).